The following is a 627-amino-acid chain: Plasmepsin IX (627 aa).

The Cytoplasmic portion of the chain corresponds to 1–13 (MFFINFKKIKKKQ). Residues 14-34 (FPIYLTQHRIITVFLIFIYFI) form a helical; Signal-anchor for type II membrane protein membrane-spanning segment. Residues 35–627 (NLKDCFHINN…SSLHNKINNL (593 aa)) are Lumenal-facing. The 378-residue stretch at 228-605 (YVGYIQIGTP…NNNSSYVGIA (378 aa)) folds into the Peptidase A1 domain. Active-site residues include Asp-246 and Asp-495.

This sequence belongs to the peptidase A1 family. In terms of processing, autocleaved into a p55 mature form.

The protein localises to the membrane. Its subcellular location is the cytoplasmic vesicle. It is found in the secretory vesicle. It localises to the rhoptry. With respect to regulation, inhibited by small molecule 49c. Inhibited by small molecule WM382. During the asexual blood stage, initiates the proteolytic maturation of several rhoptry proteins and thus, is required for merozoite invasion of host erythrocytes and probably the subsequent development of the ring-stage. Cleaves rhoptry associated protein 1 RAP1 and apical sushi protein ASP during schizont maturation. Also cleaves rhoptry protein RON3. In Plasmodium falciparum (isolate 3D7), this protein is Plasmepsin IX.